The primary structure comprises 144 residues: D-aminoacyl-tRNA deacylase (144 aa).

The Gly-cisPro motif, important for rejection of L-amino acids signature appears at 136–137 (GP).

The protein belongs to the DTD family. Homodimer.

It is found in the cytoplasm. The catalysed reaction is glycyl-tRNA(Ala) + H2O = tRNA(Ala) + glycine + H(+). It catalyses the reaction a D-aminoacyl-tRNA + H2O = a tRNA + a D-alpha-amino acid + H(+). In terms of biological role, an aminoacyl-tRNA editing enzyme that deacylates mischarged D-aminoacyl-tRNAs. Also deacylates mischarged glycyl-tRNA(Ala), protecting cells against glycine mischarging by AlaRS. Acts via tRNA-based rather than protein-based catalysis; rejects L-amino acids rather than detecting D-amino acids in the active site. By recycling D-aminoacyl-tRNA to D-amino acids and free tRNA molecules, this enzyme counteracts the toxicity associated with the formation of D-aminoacyl-tRNA entities in vivo and helps enforce protein L-homochirality. The chain is D-aminoacyl-tRNA deacylase from Haemophilus influenzae (strain ATCC 51907 / DSM 11121 / KW20 / Rd).